The primary structure comprises 484 residues: Cysteine--tRNA ligase (484 aa).

Zn(2+) is bound at residue C29. The 'HIGH' region motif lies at 31–41 (ITVYDYCHLGH). Residues C215, H240, and E244 each coordinate Zn(2+). The short motif at 272–276 (KMSKS) is the 'KMSKS' region element. Residue K275 coordinates ATP.

It belongs to the class-I aminoacyl-tRNA synthetase family. As to quaternary structure, monomer. Zn(2+) serves as cofactor.

The protein resides in the cytoplasm. It catalyses the reaction tRNA(Cys) + L-cysteine + ATP = L-cysteinyl-tRNA(Cys) + AMP + diphosphate. In Rippkaea orientalis (strain PCC 8801 / RF-1) (Cyanothece sp. (strain PCC 8801)), this protein is Cysteine--tRNA ligase.